Here is a 69-residue protein sequence, read N- to C-terminus: Cytochrome b-c1 complex subunit 6-1, mitochondrial (69 aa).

2 disulfides stabilise this stretch: Cys-17–Cys-59 and Cys-31–Cys-45.

This sequence belongs to the UQCRH/QCR6 family. Component of the ubiquinol-cytochrome c oxidoreductase (cytochrome b-c1 complex, complex III, CIII), a multisubunit enzyme composed of 10 subunits. The complex is composed of 3 respiratory subunits cytochrome b (MT-CYB), cytochrome c1 (CYC1-1 or CYC1-2) and Rieske protein (UCR1-1 or UCR1-2), 2 core protein subunits MPPalpha1 (or MPPalpha2) and MPPB, and 5 low-molecular weight protein subunits QCR7-1 (or QCR7-2), UCRQ-1 (or UCRQ-2), QCR9, UCRY and probably QCR6-1 (or QCR6-2). The complex exists as an obligatory dimer and forms supercomplexes (SCs) in the inner mitochondrial membrane with NADH-ubiquinone oxidoreductase (complex I, CI), resulting in different assemblies (supercomplexes SCI(1)III(2) and SCI(2)III(4)).

Its subcellular location is the mitochondrion inner membrane. Component of the ubiquinol-cytochrome c oxidoreductase, a multisubunit transmembrane complex that is part of the mitochondrial electron transport chain which drives oxidative phosphorylation. The respiratory chain contains 3 multisubunit complexes succinate dehydrogenase (complex II, CII), ubiquinol-cytochrome c oxidoreductase (cytochrome b-c1 complex, complex III, CIII) and cytochrome c oxidase (complex IV, CIV), that cooperate to transfer electrons derived from NADH and succinate to molecular oxygen, creating an electrochemical gradient over the inner membrane that drives transmembrane transport and the ATP synthase. The cytochrome b-c1 complex catalyzes electron transfer from ubiquinol to cytochrome c, linking this redox reaction to translocation of protons across the mitochondrial inner membrane, with protons being carried across the membrane as hydrogens on the quinol. In the process called Q cycle, 2 protons are consumed from the matrix, 4 protons are released into the intermembrane space and 2 electrons are passed to cytochrome c. This chain is Cytochrome b-c1 complex subunit 6-1, mitochondrial (QCR6-1), found in Arabidopsis thaliana (Mouse-ear cress).